The following is a 260-amino-acid chain: CD27 antigen (260 aa).

The signal sequence occupies residues 1-19 (MARPHPWWLCVLGTLVGLS). At 20–191 (ATPAPKSCPE…RSLCSSDFIR (172 aa)) the chain is on the extracellular side. 3 TNFR-Cys repeats span residues 26 to 63 (SCPERHYWAQGKLCCQMCEPGTFLVKDCDQHRKAAQCD), 64 to 104 (PCIP…NAEC), and 105 to 141 (ACRNGWQCRDKECTECDPLPNPSLTARSSQALSPHPQ). 8 disulfide bridges follow: C27–C39, C40–C53, C43–C62, C65–C81, C84–C96, C87–C104, C106–C120, and C112–C117. Residue N95 is glycosylated (N-linked (GlcNAc...) asparagine). The O-linked (GalNAc...) serine glycan is linked to S127. Residues 192 to 212 (ILVIFSGMFLVFTLAGALFLH) traverse the membrane as a helical segment. Over 213–260 (QRRKYRSNKGESPVEPAEPCHYSCPREEEGSTIPIQEDYRKPEPACSP) the chain is Cytoplasmic. S219 bears the Phosphoserine mark. Residues 219-260 (SNKGESPVEPAEPCHYSCPREEEGSTIPIQEDYRKPEPACSP) are disordered. The segment covering 249 to 260 (EDYRKPEPACSP) has biased composition (basic and acidic residues).

In terms of assembly, homodimer. Interacts with SIVA1; may play a role in apoptosis through association with SIVA1. Interacts with TRAF2. Interacts ith PTPN6. Phosphorylated. Post-translationally, N-glycosylated. In terms of processing, O-glycosylated with core 1 or possibly core 8 glycans. In terms of tissue distribution, found in most T-lymphocytes.

The protein localises to the cell membrane. Costimulatory immune-checkpoint receptor expressed at the surface of T-cells, NK-cells and B-cells which binds to and is activated by its ligand CD70/CD27L expressed by B-cells. The CD70-CD27 signaling pathway mediates antigen-specific T-cell activation and expansion which in turn provides immune surveillance of B-cells. Mechanistically, CD70 ligation activates the TRAF2-PTPN6 axis that subsequently inhibits LCK phosphorylation to promote phenotypic and transcriptional adaptations of T-cell memory. In addition, activation by CD70 on early progenitor cells provides a negative feedback signal to leukocyte differentiation during immune activation and thus modulates hematopoiesis. Negatively regulates the function of Th2 lymphocytes in the adipose tissue. The polypeptide is CD27 antigen (Homo sapiens (Human)).